The primary structure comprises 359 residues: N-acetylneuraminate-9-phosphate synthase (359 aa).

K61, K74, and K79 each carry N6-acetyllysine. S275 is modified (phosphoserine). An N6-acetyllysine modification is found at K290. In terms of domain architecture, AFP-like spans 294-353; it reads SVVAKVKIPAGTTLTLDMLTVKVGEPKGYPPEDIFNLAGKKVLVTIEEDDTVMEESVESH.

As to expression, ubiquitous.

It is found in the cytoplasm. The catalysed reaction is aldehydo-N-acetyl-D-mannosamine 6-phosphate + phosphoenolpyruvate + H2O = N-acetylneuraminate 9-phosphate + phosphate. In terms of biological role, catalyzes condensation of phosphoenolpyruvate (PEP) and N-acetylmannosamine 6-phosphate (ManNAc-6-P) to synthesize N-acetylneuraminate-9-phosphate (Neu5Ac-9-P). Neu5Ac-9-P is the phosphorylated forms of sialic acid N-acetylneuraminic acid (Neu5Ac). In contrast with human ortholog, has no detectable activity towards D-mannose 6-phosphate. This is N-acetylneuraminate-9-phosphate synthase from Mus musculus (Mouse).